The sequence spans 115 residues: C-type natriuretic peptide prohormone (115 aa).

The disordered stretch occupies residues 24 to 49; the sequence is PSDELNNEAEEMSPAASLPELNADQS. Cysteine 99 and cysteine 115 are disulfide-bonded.

This sequence belongs to the natriuretic peptide family. In terms of tissue distribution, CNP-115 is differentially processed to produce CNP-38 and CNP-39 in the heart and CNP-22 in the brain.

Its subcellular location is the secreted. Its function is as follows. Hormone which may be vasoactive and natriuretic. Has a cGMP-stimulating activity. The sequence is that of C-type natriuretic peptide prohormone from Scyliorhinus canicula (Small-spotted catshark).